A 713-amino-acid chain; its full sequence is Protein-glucosylgalactosylhydroxylysine glucosidase (713 aa).

An N-terminal signal peptide occupies residues 1–21 (MIINSQEYLQPPQWWNERVEA). Asn104, Asn160, Asn171, Asn186, and Asn283 each carry an N-linked (GlcNAc...) asparagine glycan. 317–318 (WD) contacts substrate. A glycan (N-linked (GlcNAc...) asparagine) is linked at Asn361. Glu451 acts as the Proton donor in catalysis. Residues Asn457 and Asn481 are each glycosylated (N-linked (GlcNAc...) asparagine). 521 to 522 (KQ) provides a ligand contact to substrate. N-linked (GlcNAc...) asparagine glycans are attached at residues Asn535, Asn576, and Asn662.

Belongs to the glycosyl hydrolase 65 family.

Its subcellular location is the secreted. It catalyses the reaction (5R)-5-O-[alpha-D-glucosyl-(1-&gt;2)-beta-D-galactosyl]-5-hydroxy-L-lysyl-[collagen] + H2O = (5R)-5-O-(beta-D-galactosyl)-5-hydroxy-L-lysyl-[collagen] + D-glucose. Its function is as follows. Catalyzes the hydrolysis of glucose from the disaccharide unit linked to hydroxylysine residues of collagen and collagen-like proteins. This Dictyostelium discoideum (Social amoeba) protein is Protein-glucosylgalactosylhydroxylysine glucosidase.